A 602-amino-acid polypeptide reads, in one-letter code: VSPTSEQYDSLLRQMWERMDEGCGGTIYVIGQGSDGTEYGLSEADMEASYATVKSMAEQIEADVILLRERQEAGGRVRDYLVRKRVGDNDFLEVRVAVVGNVDAGKSTLLGVLTHGELDNGRGFARQKLFRHKHEIESGRTSSVGNDILGFDSEGNVVNKPDSHGGSLEWTKICEKSTKVITFIDLAGHEKYLKTTVFGMTGHLPDFCMLMVGSNAGIVGMTKEHLGLALALNVPVFVVVTKIDMCPANILQETLKLLQRLLKSPGCRKIPVLVQSKDDVIVTASNFSSERMCPIFQISNVTGENLDLLKMFLNLLSPRTSYREEEPAEFQIDDTYSVPGVGTVVSGTTLRGLIKLNDTLLLGPDPLGNFLSIAVKSIHRKRMPVKEVRGGQTASFALKKIKRSSIRKGMVMVSPRLNPQASWEFEAEILVLHHPTTISPRYQAMVHCGSIRQTATILSMDKDCLRTGDKATVHFRFIKTPEYLHIDQRLVFREGRTKAVGTITKLLQTTNNSPMNSKPQQIKMQSTKKGPLTKRDEGGPSGGPAVGAPPPGDEASSLGAGQPAASCNLQPQPKPSSGGRRRGGQRYKVKSQGACVTPASGC.

A Phosphoserine modification is found at S2. A tr-type G domain is found at 91–322 (FLEVRVAVVG…LNLLSPRTSY (232 aa)). The tract at residues 100–107 (GNVDAGKS) is G1. Position 100 to 107 (100 to 107 (GNVDAGKS)) interacts with GTP. The segment at 139-143 (GRTSS) is G2. The interval 185–188 (DLAG) is G3. GTP-binding positions include 185-189 (DLAGH) and 241-244 (TKID). The segment at 241–244 (TKID) is G4. The G5 stretch occupies residues 299 to 301 (SNV). Polar residues predominate over residues 506 to 528 (LLQTTNNSPMNSKPQQIKMQSTK). Residues 506–602 (LLQTTNNSPM…GACVTPASGC (97 aa)) form a disordered region. S513 is subject to Phosphoserine. Positions 579–589 (GRRRGGQRYKV) are enriched in basic residues.

Belongs to the TRAFAC class translation factor GTPase superfamily. Classic translation factor GTPase family. GTPBP1 subfamily. As to quaternary structure, interacts with EXOSC2/RRP4, EXOSC3/RRP40, EXOSC5/RRP46, HNRNPD, HNRNPR and SYNCRIP. Identified in a complex with AANAT mRNA, but does not bind mRNA by itself.

The protein localises to the cytoplasm. Its function is as follows. Promotes degradation of target mRNA species. Plays a role in the regulation of circadian mRNA stability. Binds GTP and has GTPase activity. This Pongo abelii (Sumatran orangutan) protein is GTP-binding protein 1 (GTPBP1).